The following is a 374-amino-acid chain: Alanine racemase (374 aa).

K35 (proton acceptor; specific for D-alanine) is an active-site residue. N6-(pyridoxal phosphate)lysine is present on K35. Position 130 (R130) interacts with substrate. The active-site Proton acceptor; specific for L-alanine is Y261. M309 contributes to the substrate binding site.

It belongs to the alanine racemase family. It depends on pyridoxal 5'-phosphate as a cofactor.

It catalyses the reaction L-alanine = D-alanine. Its pathway is amino-acid biosynthesis; D-alanine biosynthesis; D-alanine from L-alanine: step 1/1. In terms of biological role, catalyzes the interconversion of L-alanine and D-alanine. May also act on other amino acids. This chain is Alanine racemase (alr), found in Albidiferax ferrireducens (strain ATCC BAA-621 / DSM 15236 / T118) (Rhodoferax ferrireducens).